A 122-amino-acid polypeptide reads, in one-letter code: Large ribosomal subunit protein uL14c (122 aa).

Belongs to the universal ribosomal protein uL14 family. Part of the 50S ribosomal subunit.

Its subcellular location is the plastid. The protein localises to the chloroplast. Its function is as follows. Binds to 23S rRNA. The sequence is that of Large ribosomal subunit protein uL14c from Adiantum capillus-veneris (Maidenhair fern).